The following is a 190-amino-acid chain: FUN14 domain-containing protein 2 (190 aa).

Residues 1–13 are compositionally biased toward polar residues; it reads METSTQRTGSHLA. Residues 1–31 are disordered; it reads METSTQRTGSHLAQTAAARHSASSRGEAARV. The Cytoplasmic portion of the chain corresponds to 1 to 81; sequence METSTQRTGS…GQESGPSAEK (81 aa). A phosphoserine mark is found at Ser10 and Ser54. A helical transmembrane segment spans residues 82 to 102; the sequence is YSVATQLLIGGVTGWCTGFIF. Topologically, residues 103–108 are mitochondrial intermembrane; the sequence is QKVGKL. Residues 109–129 traverse the membrane as a helical segment; that stretch reads AATAVGGGFFLLQLANHTGYI. Residues 130–165 lie on the Cytoplasmic side of the membrane; sequence KVDWQRVEKDMKKAKEQLKIRKSNQIPTEVKSKAEE. Ser152 is subject to Phosphoserine. Residues 166 to 186 traverse the membrane as a helical segment; it reads VVSFVKKNVLVTGGFFGGFLL. The Mitochondrial intermembrane segment spans residues 187-190; it reads GMAS.

This sequence belongs to the FUN14 family.

The protein resides in the mitochondrion outer membrane. It is found in the nucleus. Its function is as follows. Binds directly and specifically 1,2-Diacyl-sn-glycero-3-phospho-(1'-myo-inositol-3',4',5'-bisphosphate) (PIP3) leading to the recruitment of PIP3 to mitochondria and may play a role in the regulation of the platelet activation via AKT/GSK3B/cGMP signaling pathways. May act as transcription factor that regulates SREBP1 (isoform SREBP-1C) expression in order to modulate triglyceride (TG) homeostasis in hepatocytes. The protein is FUN14 domain-containing protein 2 of Bos taurus (Bovine).